We begin with the raw amino-acid sequence, 1073 residues long: Duffy receptor alpha form (1073 aa).

The signal sequence occupies residues 1-21 (MEGKKKRPLFFLLVLLLSHKA). Residues 22–1007 (NNVLFERMNG…YECFTKGSST (986 aa)) lie on the Extracellular side of the membrane. 3 N-linked (GlcNAc...) asparagine glycosylation sites follow: Asn-134, Asn-179, and Asn-202. Intrachain disulfides connect Cys-214-Cys-243 and Cys-227-Cys-234. Residues Asn-252 and Asn-348 are each glycosylated (N-linked (GlcNAc...) asparagine). Intrachain disulfides connect Cys-297–Cys-374, Cys-412–Cys-429, Cys-424–Cys-504, and Cys-433–Cys-502. The segment at 517-915 (VKNVGSGVES…LNNRKLNRDQ (399 aa)) is disordered. The span at 528 to 543 (AASSNPITEAVKSSSG) shows a compositional bias: polar residues. Residues 546 to 561 (KVQEDSAHKSVNKGEG) show a composition bias toward basic and acidic residues. Polar residues predominate over residues 562–576 (KSSTNEADPGSQSGA). 2 stretches are compositionally biased toward basic and acidic residues: residues 675–710 (GEVH…DDRS) and 717–734 (HTDE…KDTE). Asn-679 carries N-linked (GlcNAc...) asparagine glycosylation. Over residues 736 to 766 (AGGSTLTPEQNVSVASDNGNVPGSGNKQNEG) the composition is skewed to polar residues. N-linked (GlcNAc...) asparagine glycans are attached at residues Asn-746, Asn-779, and Asn-788. Basic and acidic residues predominate over residues 799–810 (GNEKDFQKHDFM). 2 stretches are compositionally biased toward low complexity: residues 821–843 (SDHT…SSDH) and 851–864 (SDQT…SDQT). The span at 867-891 (TEGHHRDNVRNPEIKSSEDMSKGDF) shows a compositional bias: basic and acidic residues. Residues 893–909 (RNSNSNELYSHNNLNNR) are compositionally biased toward polar residues. A helical transmembrane segment spans residues 1008–1029 (GIVYFATGGAFLIILLLFASWN). Residues 1030–1073 (AASNDYEEEATFDEFVEYSDDIHRTPLMPNDIEHMQQFTPLDYS) lie on the Cytoplasmic side of the membrane.

In terms of assembly, interacts (via region II) with human ACKR1 (via N-terminal extracellular domain). Interacts (via region II) with rhesus macaque ACKR1 (via N-terminal extracellular domain).

The protein resides in the cell membrane. It localises to the cytoplasmic vesicle. Its subcellular location is the secretory vesicle. It is found in the microneme. Its function is as follows. Binds to the human erythrocyte Duffy blood group determinant (ACKR1). Binds to the rhesus macaque erythrocyte Duffy blood group determinant (ACKR1). The sequence is that of Duffy receptor alpha form from Plasmodium knowlesi.